A 179-amino-acid chain; its full sequence is Inner membrane-spanning protein YciB (179 aa).

5 helical membrane-spanning segments follow: residues 22-42 (IYAA…YSWV), 50-70 (MALI…FFHN), 76-96 (WKVT…QWVM), 121-141 (LAWA…AFWL), and 149-169 (FKVF…GVYI).

It belongs to the YciB family.

It localises to the cell inner membrane. Plays a role in cell envelope biogenesis, maintenance of cell envelope integrity and membrane homeostasis. The polypeptide is Inner membrane-spanning protein YciB (Salmonella arizonae (strain ATCC BAA-731 / CDC346-86 / RSK2980)).